A 383-amino-acid polypeptide reads, in one-letter code: S-adenosylmethionine synthase (383 aa).

His-15 is a binding site for ATP. Asp-17 serves as a coordination point for Mg(2+). Glu-43 is a K(+) binding site. L-methionine contacts are provided by Glu-56 and Gln-99. The interval 99–109 (QSPDINQGVDR) is flexible loop. ATP contacts are provided by residues 164 to 166 (DAK), 230 to 231 (RF), Asp-239, 245 to 246 (RK), Ala-262, and Lys-266. Asp-239 is a binding site for L-methionine. Lys-270 contributes to the L-methionine binding site.

This sequence belongs to the AdoMet synthase family. As to quaternary structure, homotetramer; dimer of dimers. It depends on Mg(2+) as a cofactor. Requires K(+) as cofactor.

It is found in the cytoplasm. It catalyses the reaction L-methionine + ATP + H2O = S-adenosyl-L-methionine + phosphate + diphosphate. It functions in the pathway amino-acid biosynthesis; S-adenosyl-L-methionine biosynthesis; S-adenosyl-L-methionine from L-methionine: step 1/1. Catalyzes the formation of S-adenosylmethionine (AdoMet) from methionine and ATP. The overall synthetic reaction is composed of two sequential steps, AdoMet formation and the subsequent tripolyphosphate hydrolysis which occurs prior to release of AdoMet from the enzyme. In Pectobacterium carotovorum subsp. carotovorum (strain PC1), this protein is S-adenosylmethionine synthase.